We begin with the raw amino-acid sequence, 305 residues long: Putative UDP-glucose 4-epimerase (305 aa).

Residues 10–11, 30–35, 50–51, and 71–75 contribute to the NAD(+) site; these read FI, DNLTTG, DI, and QAAQI. Residues Ser-115 and Tyr-140 each contribute to the substrate site. Residues Tyr-140 and Lys-144 each contribute to the NAD(+) site. Tyr-140 functions as the Proton acceptor in the catalytic mechanism. Substrate is bound by residues Asn-169, 183-184, 198-200, Arg-207, and 263-266; these read VI, IIF, and REGE.

The protein belongs to the NAD(P)-dependent epimerase/dehydratase family. Requires NAD(+) as cofactor.

It catalyses the reaction UDP-alpha-D-glucose = UDP-alpha-D-galactose. It functions in the pathway carbohydrate metabolism; galactose metabolism. Involved in the metabolism of galactose. Catalyzes the conversion of UDP-galactose (UDP-Gal) to UDP-glucose (UDP-Glc) through a mechanism involving the transient reduction of NAD. The polypeptide is Putative UDP-glucose 4-epimerase (Methanocaldococcus jannaschii (strain ATCC 43067 / DSM 2661 / JAL-1 / JCM 10045 / NBRC 100440) (Methanococcus jannaschii)).